Reading from the N-terminus, the 1505-residue chain is Actin cytoskeleton-regulatory complex protein PAN1 (1505 aa).

Residues Met1–Leu30 are disordered. The EH 1 domain occupies Asp85 to Phe174. The EF-hand 1 domain maps to Leu118 to Ala153. Polar residues-rich tracts occupy residues Ala364–Phe393 and Ala403–Val413. Disordered regions lie at residues Ala364 to Gln416 and Leu422 to Trp441. Positions Glu492–Thr581 constitute an EH 2 domain. The EF-hand 2 domain occupies Leu525–Arg560. The segment covering Ser588–Lys604 has biased composition (polar residues). The disordered stretch occupies residues Ser588–Asp620. Residues Arg677 to Asp752 are a coiled coil. Disordered stretches follow at residues Glu867–Thr927 and Glu948–Leu1505. A compositionally biased stretch (polar residues) spans Ala872–Ala885. 3 stretches are compositionally biased toward basic and acidic residues: residues Lys960–Pro980, Ser1034–Tyr1050, and Ser1069–Lys1079. Polar residues predominate over residues Gln1086–Pro1096. Residues Arg1109–Glu1123 are compositionally biased toward basic and acidic residues. Low complexity predominate over residues Ala1133–Pro1175. Polar residues predominate over residues Val1193–Thr1208. Acidic residues predominate over residues Asp1216–Glu1225. The segment covering Pro1261–Met1280 has biased composition (basic and acidic residues). The span at Glu1283–Ser1319 shows a compositional bias: polar residues. Residues Ala1321–Glu1330 are compositionally biased toward low complexity. A compositionally biased stretch (pro residues) spans Ser1331 to Pro1453. The segment covering Leu1454–Ala1472 has biased composition (low complexity). Positions Asn1474–Val1491 constitute a WH2 domain.

This sequence belongs to the PAN1 family. Component of the PAN1 actin cytoskeleton-regulatory complex.

The protein resides in the cell membrane. Its subcellular location is the endosome membrane. It localises to the cytoplasm. The protein localises to the cytoskeleton. It is found in the actin patch. Component of the PAN1 actin cytoskeleton-regulatory complex required for the internalization of endosomes during actin-coupled endocytosis. The complex links the site of endocytosis to the cell membrane-associated actin cytoskeleton. Mediates uptake of external molecules and vacuolar degradation of plasma membrane proteins. Plays a role in the proper organization of the cell membrane-associated actin cytoskeleton and promotes its destabilization. In Lodderomyces elongisporus (strain ATCC 11503 / CBS 2605 / JCM 1781 / NBRC 1676 / NRRL YB-4239) (Yeast), this protein is Actin cytoskeleton-regulatory complex protein PAN1 (PAN1).